Consider the following 411-residue polypeptide: 1-deoxy-D-xylulose 5-phosphate reductoisomerase (411 aa).

The NADPH site is built by Thr11, Gly12, Ser13, Ile14, and Asn124. Residue Lys125 participates in 1-deoxy-D-xylulose 5-phosphate binding. Glu126 lines the NADPH pocket. Asp150 contacts Mn(2+). 4 residues coordinate 1-deoxy-D-xylulose 5-phosphate: Ser151, Glu152, Ser186, and His209. Glu152 contacts Mn(2+). An NADPH-binding site is contributed by Gly215. 1-deoxy-D-xylulose 5-phosphate contacts are provided by Ser222, Asn227, Lys228, and Glu231. Mn(2+) is bound at residue Glu231.

The protein belongs to the DXR family. Mg(2+) serves as cofactor. The cofactor is Mn(2+).

It carries out the reaction 2-C-methyl-D-erythritol 4-phosphate + NADP(+) = 1-deoxy-D-xylulose 5-phosphate + NADPH + H(+). It participates in isoprenoid biosynthesis; isopentenyl diphosphate biosynthesis via DXP pathway; isopentenyl diphosphate from 1-deoxy-D-xylulose 5-phosphate: step 1/6. Functionally, catalyzes the NADPH-dependent rearrangement and reduction of 1-deoxy-D-xylulose-5-phosphate (DXP) to 2-C-methyl-D-erythritol 4-phosphate (MEP). The sequence is that of 1-deoxy-D-xylulose 5-phosphate reductoisomerase from Psychrobacter sp. (strain PRwf-1).